Consider the following 1238-residue polypeptide: MSADLQQGTTNAADFSLTVLRARIALLATAIGGPDYTSQIDPPPYKLGDDCLACLKDLKRWFKLVDDQQKRWDVAMAVAEYRILTDDLLPILIDWENKCSLAAKLAKNNPDHEEFRNKAYYDKIALNCLQLLVLMTWPLIVTEQSSSNQITLYGELKKHQLVYKKTILSMESGKVLRAAIRLALDVIKIDRLSRTPRDNMVLKLVLNFFRNVIAIEPGEFTINTKKSMPKKGITSIDTLPPNVSMDDISLNTVISSFHKNKVFGFLLTLTSSLSKEFDQDFINIPLLEIMFYFTKDVNQELLFPRQFETGTHSKVVNKNESSSANNIVTSAGFELSKLLQKEHQMRKNVIKHTSARHSRFGGLLSIQTPDKTRLTVSGSQALVDEKIALQKLDDSKKWNKRIIKKHQSVAAEGLPNSLLNSQTGKAIFFTESNGKHFKEFINNFIDSGFNILLHSVTNYFTTEQDRMVTLEQVEYLLFFAWFVKYQLLRSKIDNSADIKQVSEALKEVTFILVSSLLRSAYDLKNWTVTHAGMIAFNELLNLVSRTKAAQEEDSTDIEFIVSRLFSDERIQLLSNLPKIGSKYSLQFMKSCIELTHSVLKVLEQYSDDKTLVIEGKSRRQKKFNISEGDITKLIEEENVDRDEALDILTSSLRSIEVNFQKVQANYMTEPVIETYINFLERFRELEDDSIKKVFSFFHRVFVQAKEQALLFRFDLIILLREMLSPDGLDRMSRSRKYVSQFSDYFLARLKKRLKKSPAWFVGLLFPPLHNSEVGFYQRYGEYNVLNNESMYAAPASQFKPIPDEEALPPSILLDMKYGVLVSTLLDDGKTELLDQLLKHITHTLDIFKSWLTVNVNAGKETVNPPNEYFTLTGVLNNDPIFKDKDYRALLLLIGYSIPRKINEPCFLPGTVEVSDLTVSCELVKKYLSTPFETPNGLPSSSYLLRVRSEKDSFSHNEQDGWEGDDDYDYNDPYIVPDDQILSKSDAAYFKDLDNNASDKLKGTKFSKGIARSKKKDKRKRRKGEAKTNLPMFGDQDDERPQTVRERHGVFSKEFISDSEDDEDLMNPIFFENETYMRWLLDKNNGQLTEDRYIQFAKFAAERMNNGGVVTGDYTSLFGGSIPSIESIRATESSSFAPDKSLISLASHVASEMSIFDVNNNNNNQLSDDDVNSESRNSLGSSQPSNSQNMFQSEVYSRKESTKRSLEASAADESDEDEEAIRLFGKKSRVVLSQGDSDD.

Phosphoserine occurs at positions 626 and 654. The segment at 1008-1051 (GIARSKKKDKRKRRKGEAKTNLPMFGDQDDERPQTVRERHGVFS) is disordered. Basic residues predominate over residues 1010 to 1023 (ARSKKKDKRKRRKG). Basic and acidic residues predominate over residues 1038–1050 (ERPQTVRERHGVF). 2 positions are modified to phosphoserine: S1056 and S1058. Residues 1159 to 1218 (NNNNNQLSDDDVNSESRNSLGSSQPSNSQNMFQSEVYSRKESTKRSLEASAADESDEDEE) are disordered. A compositionally biased stretch (polar residues) spans 1173–1194 (ESRNSLGSSQPSNSQNMFQSEV). The span at 1195–1205 (YSRKESTKRSL) shows a compositional bias: basic and acidic residues. The segment covering 1209–1218 (AADESDEDEE) has biased composition (acidic residues). A Phosphoserine modification is found at S1213.

It belongs to the timeless family. Component of the fork protection complex (FPC) consisting of TOF1 and CSM3. Interacts with WSS1 and ESC4.

The protein resides in the nucleus. Its function is as follows. Forms a fork protection complex (FPC) with CSM3 and which is required for chromosome segregation during meiosis and DNA damage repair. FPC coordinates leading and lagging strand synthesis and moves with the replication fork. FPC stabilizes replication forks in a configuration that is recognized by replication checkpoint sensors and protects stalled replication forks against the fork-releasing activity of RRM3 helicase. The protein is Topoisomerase 1-associated factor 1 (TOF1) of Saccharomyces cerevisiae (strain ATCC 204508 / S288c) (Baker's yeast).